Reading from the N-terminus, the 220-residue chain is Deoxyribose-phosphate aldolase 1 (220 aa).

The Proton donor/acceptor role is filled by Asp89. Residue Lys151 is the Schiff-base intermediate with acetaldehyde of the active site. Residue Lys180 is the Proton donor/acceptor of the active site.

Belongs to the DeoC/FbaB aldolase family. DeoC type 1 subfamily.

It is found in the cytoplasm. It carries out the reaction 2-deoxy-D-ribose 5-phosphate = D-glyceraldehyde 3-phosphate + acetaldehyde. The protein operates within carbohydrate degradation; 2-deoxy-D-ribose 1-phosphate degradation; D-glyceraldehyde 3-phosphate and acetaldehyde from 2-deoxy-alpha-D-ribose 1-phosphate: step 2/2. Functionally, catalyzes a reversible aldol reaction between acetaldehyde and D-glyceraldehyde 3-phosphate to generate 2-deoxy-D-ribose 5-phosphate. The protein is Deoxyribose-phosphate aldolase 1 of Mesoplasma florum (strain ATCC 33453 / NBRC 100688 / NCTC 11704 / L1) (Acholeplasma florum).